Reading from the N-terminus, the 160-residue chain is UPF0178 protein BB1267 (160 aa).

It belongs to the UPF0178 family.

The chain is UPF0178 protein BB1267 from Bordetella bronchiseptica (strain ATCC BAA-588 / NCTC 13252 / RB50) (Alcaligenes bronchisepticus).